We begin with the raw amino-acid sequence, 655 residues long: p-hydroxybenzoic acid efflux pump subunit AaeB (655 aa).

11 helical membrane passes run 13-33 (FAVK…HFQL), 38-58 (WAVL…GGEP), 69-89 (LRII…ITMI), 93-113 (LLMI…SSLV), 121-141 (WGLS…EPLL), 152-172 (EIVI…PRSV), 370-390 (LFWL…IAVV), 407-427 (FIYG…VIIP), 431-451 (QSML…GIEV), 459-479 (MGAL…TFHF), and 482-502 (FLDS…VILL).

It belongs to the aromatic acid exporter ArAE (TC 2.A.85) family.

It is found in the cell inner membrane. Forms an efflux pump with AaeA. Could function as a metabolic relief valve, allowing to eliminate certain compounds when they accumulate to high levels in the cell. This chain is p-hydroxybenzoic acid efflux pump subunit AaeB, found in Citrobacter koseri (strain ATCC BAA-895 / CDC 4225-83 / SGSC4696).